Here is a 214-residue protein sequence, read N- to C-terminus: Large ribosomal subunit protein bL25 (214 aa).

The protein belongs to the bacterial ribosomal protein bL25 family. CTC subfamily. In terms of assembly, part of the 50S ribosomal subunit; part of the 5S rRNA/L5/L18/L25 subcomplex. Contacts the 5S rRNA. Binds to the 5S rRNA independently of L5 and L18.

Its function is as follows. This is one of the proteins that binds to the 5S RNA in the ribosome where it forms part of the central protuberance. The sequence is that of Large ribosomal subunit protein bL25 from Polynucleobacter necessarius subsp. necessarius (strain STIR1).